The chain runs to 295 residues: Iron-sulfur cluster carrier protein (295 aa).

Position 38 to 45 (38 to 45 (GKGGVGKS)) interacts with ATP.

This sequence belongs to the Mrp/NBP35 ATP-binding proteins family. As to quaternary structure, homodimer.

Its function is as follows. Binds and transfers iron-sulfur (Fe-S) clusters to target apoproteins. Can hydrolyze ATP. The protein is Iron-sulfur cluster carrier protein of Pyrococcus abyssi (strain GE5 / Orsay).